Reading from the N-terminus, the 74-residue chain is MDMVSLKFIGVGCMAIGMLGAALGVSNIFSSLLNSIARNPSATEQLQRMALIGAGLAEAMGLFSFVIAMLLIFS.

Helical transmembrane passes span 8–28 (FIGVGCMAIGMLGAALGVSNI) and 52–72 (IGAGLAEAMGLFSFVIAMLLI).

The protein belongs to the ATPase C chain family. As to quaternary structure, F-type ATPases have 2 components, F(1) - the catalytic core - and F(0) - the membrane proton channel. F(1) has five subunits: alpha(3), beta(3), gamma(1), delta(1), epsilon(1). F(0) has three main subunits: a(1), b(2) and c(10-14). The alpha and beta chains form an alternating ring which encloses part of the gamma chain. F(1) is attached to F(0) by a central stalk formed by the gamma and epsilon chains, while a peripheral stalk is formed by the delta and b chains.

The protein resides in the cell inner membrane. F(1)F(0) ATP synthase produces ATP from ADP in the presence of a proton or sodium gradient. F-type ATPases consist of two structural domains, F(1) containing the extramembraneous catalytic core and F(0) containing the membrane proton channel, linked together by a central stalk and a peripheral stalk. During catalysis, ATP synthesis in the catalytic domain of F(1) is coupled via a rotary mechanism of the central stalk subunits to proton translocation. In terms of biological role, key component of the F(0) channel; it plays a direct role in translocation across the membrane. A homomeric c-ring of between 10-14 subunits forms the central stalk rotor element with the F(1) delta and epsilon subunits. The sequence is that of ATP synthase subunit c from Rickettsia bellii (strain RML369-C).